Reading from the N-terminus, the 126-residue chain is Holo-[acyl-carrier-protein] synthase (126 aa).

Mg(2+) contacts are provided by D8 and E57.

This sequence belongs to the P-Pant transferase superfamily. AcpS family. The cofactor is Mg(2+).

The protein localises to the cytoplasm. It carries out the reaction apo-[ACP] + CoA = holo-[ACP] + adenosine 3',5'-bisphosphate + H(+). Functionally, transfers the 4'-phosphopantetheine moiety from coenzyme A to a Ser of acyl-carrier-protein. In Vibrio cholerae serotype O1 (strain ATCC 39315 / El Tor Inaba N16961), this protein is Holo-[acyl-carrier-protein] synthase.